Consider the following 219-residue polypeptide: Ribose-5-phosphate isomerase A (219 aa).

Substrate is bound by residues 28–31 (TGST), 81–84 (DSAD), and 94–97 (KGGG). The active-site Proton acceptor is Glu-103. Lys-121 is a substrate binding site.

It belongs to the ribose 5-phosphate isomerase family. In terms of assembly, homodimer.

It catalyses the reaction aldehydo-D-ribose 5-phosphate = D-ribulose 5-phosphate. Its pathway is carbohydrate degradation; pentose phosphate pathway; D-ribose 5-phosphate from D-ribulose 5-phosphate (non-oxidative stage): step 1/1. Its function is as follows. Catalyzes the reversible conversion of ribose-5-phosphate to ribulose 5-phosphate. This Buchnera aphidicola subsp. Schizaphis graminum (strain Sg) protein is Ribose-5-phosphate isomerase A.